The following is a 394-amino-acid chain: Elongation factor Tu (394 aa).

In terms of domain architecture, tr-type G spans 10–205 (KPHMNVGTIG…SMDNYFDLPE (196 aa)). A G1 region spans residues 19–26 (GHVDHGKT). A GTP-binding site is contributed by 19–26 (GHVDHGKT). Thr26 provides a ligand contact to Mg(2+). The G2 stretch occupies residues 61 to 65 (GITIN). The tract at residues 82–85 (DCPG) is G3. Residues 82-86 (DCPGH) and 137-140 (NKLD) contribute to the GTP site. Residues 137 to 140 (NKLD) form a G4 region. The G5 stretch occupies residues 173–175 (SAF).

Belongs to the TRAFAC class translation factor GTPase superfamily. Classic translation factor GTPase family. EF-Tu/EF-1A subfamily. In terms of assembly, monomer.

The protein localises to the cytoplasm. It carries out the reaction GTP + H2O = GDP + phosphate + H(+). In terms of biological role, GTP hydrolase that promotes the GTP-dependent binding of aminoacyl-tRNA to the A-site of ribosomes during protein biosynthesis. In Borreliella afzelii (strain PKo) (Borrelia afzelii), this protein is Elongation factor Tu.